A 963-amino-acid chain; its full sequence is IQ motif and SEC7 domain-containing protein 1 (963 aa).

The interval 21–88 (SGVEGEAPSS…TRRPKLQHST (68 aa)) is disordered. The span at 29–38 (SSETGTSLDS) shows a compositional bias: polar residues. Phosphoserine is present on residues Ser89, Ser105, and Ser107. The 30-residue stretch at 134 to 163 (TRHAARTIQTAFRQYQMNKNFERLRSSMSE) folds into the IQ domain. A phosphoserine mark is found at Ser180, Ser249, and Ser253. Disordered stretches follow at residues 312–332 (LSPP…ESDL) and 349–513 (KEDK…RNSW). Composition is skewed to basic and acidic residues over residues 366-376 (ERQEQRLRVEH) and 430-446 (LPRE…RPLD). The span at 471 to 489 (DSINSTSNSNDTINCSSES) shows a compositional bias: low complexity. Residues Ser512 and Ser515 each carry the phosphoserine modification. An SEC7 domain is found at 517–710 (AFSNDVIRKR…MGIYERIRKR (194 aa)). Residues 774–866 (HQREIFLFND…LRESIAEVQE (93 aa)) enclose the PH domain. A coiled-coil region spans residues 848–879 (QDRKKFTDDLRESIAEVQEMEKHRIESELEKQ). A Phosphoserine modification is found at Ser892. The residue at position 911 (Tyr911) is a Phosphotyrosine. A disordered region spans residues 922-947 (LSSSLRDLSEAGKRGRRSSAGSLESN). Phosphoserine is present on residues Ser924 and Ser925.

The protein belongs to the BRAG family. In terms of assembly, interacts with ARF1 and ARF6. Interacts with GRIA2; the interaction is required for ARF6 activation. As to expression, expressed in brain, ovary, heart, lung, liver, kidney and leukocytes. Moderate expression was also detected in lung, skeletal muscle, placenta, small intestine, pancreas, spleen and testis.

The protein resides in the cytoplasm. It is found in the nucleus. Its subcellular location is the postsynaptic density. It localises to the cytoplasmic vesicle. The protein localises to the secretory vesicle. The protein resides in the synaptic vesicle. Its function is as follows. Guanine nucleotide exchange factor for ARF1 and ARF6. Guanine nucleotide exchange factor activity is enhanced by lipid binding. Accelerates GTP binding by ARFs of all three classes. Guanine nucleotide exchange protein for ARF6, mediating internalization of beta-1 integrin. Involved in neuronal development. In neurons, plays a role in the control of vesicle formation by endocytoc cargo. Upon long term depression, interacts with GRIA2 and mediates the activation of ARF6 to internalize synaptic AMPAR receptors. The chain is IQ motif and SEC7 domain-containing protein 1 from Homo sapiens (Human).